The primary structure comprises 217 residues: Ribosomal RNA small subunit methyltransferase G (217 aa).

S-adenosyl-L-methionine-binding positions include glycine 76, phenylalanine 81, 128–129 (LE), and arginine 142.

It belongs to the methyltransferase superfamily. RNA methyltransferase RsmG family.

The protein resides in the cytoplasm. The catalysed reaction is guanosine(527) in 16S rRNA + S-adenosyl-L-methionine = N(7)-methylguanosine(527) in 16S rRNA + S-adenosyl-L-homocysteine. In terms of biological role, specifically methylates the N7 position of guanine in position 527 of 16S rRNA. The protein is Ribosomal RNA small subunit methyltransferase G of Rhizorhabdus wittichii (strain DSM 6014 / CCUG 31198 / JCM 15750 / NBRC 105917 / EY 4224 / RW1) (Sphingomonas wittichii).